A 161-amino-acid polypeptide reads, in one-letter code: Nucleotide-binding protein GM21_0633 (161 aa).

Belongs to the YajQ family.

Its function is as follows. Nucleotide-binding protein. This chain is Nucleotide-binding protein GM21_0633, found in Geobacter sp. (strain M21).